The chain runs to 217 residues: ATP-dependent Clp protease proteolytic subunit 1 (217 aa).

The interval 1–24 is disordered; the sequence is MTPLTTGWHPALSPRAEEGDTPPS. The active-site Nucleophile is the serine 108. Residue histidine 133 is part of the active site.

This sequence belongs to the peptidase S14 family. As to quaternary structure, fourteen ClpP subunits assemble into 2 heptameric rings which stack back to back to give a disk-like structure with a central cavity, resembling the structure of eukaryotic proteasomes.

The protein resides in the cytoplasm. It carries out the reaction Hydrolysis of proteins to small peptides in the presence of ATP and magnesium. alpha-casein is the usual test substrate. In the absence of ATP, only oligopeptides shorter than five residues are hydrolyzed (such as succinyl-Leu-Tyr-|-NHMec, and Leu-Tyr-Leu-|-Tyr-Trp, in which cleavage of the -Tyr-|-Leu- and -Tyr-|-Trp bonds also occurs).. Its function is as follows. Cleaves peptides in various proteins in a process that requires ATP hydrolysis. Has a chymotrypsin-like activity. Plays a major role in the degradation of misfolded proteins. This is ATP-dependent Clp protease proteolytic subunit 1 from Streptomyces avermitilis (strain ATCC 31267 / DSM 46492 / JCM 5070 / NBRC 14893 / NCIMB 12804 / NRRL 8165 / MA-4680).